The following is a 148-amino-acid chain: UPF0178 protein SH2212 (148 aa).

It belongs to the UPF0178 family.

This is UPF0178 protein SH2212 from Staphylococcus haemolyticus (strain JCSC1435).